The primary structure comprises 401 residues: Formate-dependent phosphoribosylglycinamide formyltransferase (401 aa).

Residues 27 to 28 (EL) and Glu-87 contribute to the N(1)-(5-phospho-beta-D-ribosyl)glycinamide site. ATP-binding positions include Arg-119, Lys-160, 165 to 170 (SSGKGQ), 200 to 203 (EELV), and Glu-208. Residues 124 to 313 (EFAAEEVGVT…QFDLHLRAIL (190 aa)) form the ATP-grasp domain. 2 residues coordinate Mg(2+): Glu-272 and Glu-284. Residues Asp-291, Lys-361, and 368–369 (RR) each bind N(1)-(5-phospho-beta-D-ribosyl)glycinamide.

The protein belongs to the PurK/PurT family. Homodimer.

The enzyme catalyses N(1)-(5-phospho-beta-D-ribosyl)glycinamide + formate + ATP = N(2)-formyl-N(1)-(5-phospho-beta-D-ribosyl)glycinamide + ADP + phosphate + H(+). It functions in the pathway purine metabolism; IMP biosynthesis via de novo pathway; N(2)-formyl-N(1)-(5-phospho-D-ribosyl)glycinamide from N(1)-(5-phospho-D-ribosyl)glycinamide (formate route): step 1/1. In terms of biological role, involved in the de novo purine biosynthesis. Catalyzes the transfer of formate to 5-phospho-ribosyl-glycinamide (GAR), producing 5-phospho-ribosyl-N-formylglycinamide (FGAR). Formate is provided by PurU via hydrolysis of 10-formyl-tetrahydrofolate. The chain is Formate-dependent phosphoribosylglycinamide formyltransferase from Haloquadratum walsbyi (strain DSM 16790 / HBSQ001).